Reading from the N-terminus, the 302-residue chain is 4-diphosphocytidyl-2-C-methyl-D-erythritol kinase (302 aa).

The active site involves K13. 101-111 (PVASGIGGGSS) lines the ATP pocket. Residue D143 is part of the active site.

This sequence belongs to the GHMP kinase family. IspE subfamily.

It catalyses the reaction 4-CDP-2-C-methyl-D-erythritol + ATP = 4-CDP-2-C-methyl-D-erythritol 2-phosphate + ADP + H(+). It functions in the pathway isoprenoid biosynthesis; isopentenyl diphosphate biosynthesis via DXP pathway; isopentenyl diphosphate from 1-deoxy-D-xylulose 5-phosphate: step 3/6. Catalyzes the phosphorylation of the position 2 hydroxy group of 4-diphosphocytidyl-2C-methyl-D-erythritol. This Granulibacter bethesdensis (strain ATCC BAA-1260 / CGDNIH1) protein is 4-diphosphocytidyl-2-C-methyl-D-erythritol kinase.